The chain runs to 347 residues: Large ribosomal subunit protein uL10 (347 aa).

The segment at 312 to 347 is disordered; it reads AAAPAEEEVKKEEEPEEEEEDHAEEDGMAGLGALFG. The span at 325 to 338 shows a compositional bias: acidic residues; it reads EPEEEEEDHAEEDG.

Belongs to the universal ribosomal protein uL10 family. In terms of assembly, part of the 50S ribosomal subunit. Forms part of the ribosomal stalk which helps the ribosome interact with GTP-bound translation factors. Forms a heptameric L10(L12)2(L12)2(L12)2 complex, where L10 forms an elongated spine to which the L12 dimers bind in a sequential fashion.

Its function is as follows. Forms part of the ribosomal stalk, playing a central role in the interaction of the ribosome with GTP-bound translation factors. The sequence is that of Large ribosomal subunit protein uL10 from Methanosarcina acetivorans (strain ATCC 35395 / DSM 2834 / JCM 12185 / C2A).